The primary structure comprises 1075 residues: DNA-directed RNA polymerase subunit beta (1075 aa).

This sequence belongs to the RNA polymerase beta chain family. In plastids the minimal PEP RNA polymerase catalytic core is composed of four subunits: alpha, beta, beta', and beta''. When a (nuclear-encoded) sigma factor is associated with the core the holoenzyme is formed, which can initiate transcription.

It is found in the plastid. It localises to the chloroplast. The catalysed reaction is RNA(n) + a ribonucleoside 5'-triphosphate = RNA(n+1) + diphosphate. DNA-dependent RNA polymerase catalyzes the transcription of DNA into RNA using the four ribonucleoside triphosphates as substrates. This is DNA-directed RNA polymerase subunit beta from Oryza sativa (Rice).